The primary structure comprises 463 residues: V-type proton ATPase subunit S1 (463 aa).

A signal peptide spans Met1–Ala32. A propeptide spanning residues Val33–Arg225 is cleaved from the precursor. The Lumenal segment spans residues Val33–Ala412. Asn164, Asn255, Asn267, Asn290, Asn297, Asn344, Asn351, and Asn399 each carry an N-linked (GlcNAc...) asparagine glycan. Cys365 and Cys411 form a disulfide bridge. A helical transmembrane segment spans residues Gly413–Phe433. The Cytoplasmic portion of the chain corresponds to Thr434–Val463.

The protein belongs to the vacuolar ATPase subunit S1 family. Accessory component of the multisubunit proton-transporting vacuolar (V)-ATPase protein pump. Interacts (via N-terminus) with ATP6AP2 (via N-terminus). Interacts with RNASEK. Interacts with TMEM106B (via C-terminus). N-glycosylated. In terms of tissue distribution, expressed in brain cortex (at protein level). Highly expressed in islets of Langerhans. Expressed in pancreatic acini, pituitary gland, adrenal gland, lung, brain and bone marrow.

Its subcellular location is the endoplasmic reticulum membrane. It localises to the endoplasmic reticulum-Golgi intermediate compartment membrane. The protein localises to the cytoplasmic vesicle. The protein resides in the secretory vesicle. It is found in the synaptic vesicle membrane. Its subcellular location is the clathrin-coated vesicle membrane. Its function is as follows. Accessory subunit of the proton-transporting vacuolar (V)-ATPase protein pump, which is required for luminal acidification of secretory vesicles. Guides the V-type ATPase into specialized subcellular compartments, such as neuroendocrine regulated secretory vesicles or the ruffled border of the osteoclast, thereby regulating its activity. Involved in membrane trafficking and Ca(2+)-dependent membrane fusion. May play a role in the assembly of the V-type ATPase complex. In aerobic conditions, involved in intracellular iron homeostasis, thus triggering the activity of Fe(2+) prolyl hydroxylase (PHD) enzymes, and leading to HIF1A hydroxylation and subsequent proteasomal degradation. In islets of Langerhans cells, may regulate the acidification of dense-core secretory granules. In Mus musculus (Mouse), this protein is V-type proton ATPase subunit S1 (Atp6ap1).